We begin with the raw amino-acid sequence, 428 residues long: Trigger factor (428 aa).

One can recognise a PPIase FKBP-type domain in the interval 163 to 248 (GNIAVIDFKG…VKEIKVKELP (86 aa)).

This sequence belongs to the FKBP-type PPIase family. Tig subfamily.

Its subcellular location is the cytoplasm. It catalyses the reaction [protein]-peptidylproline (omega=180) = [protein]-peptidylproline (omega=0). Involved in protein export. Acts as a chaperone by maintaining the newly synthesized protein in an open conformation. Functions as a peptidyl-prolyl cis-trans isomerase. The protein is Trigger factor of Clostridium perfringens (strain ATCC 13124 / DSM 756 / JCM 1290 / NCIMB 6125 / NCTC 8237 / Type A).